The primary structure comprises 509 residues: ATP synthase subunit beta, mitochondrial (509 aa).

The N-terminal 32 residues, 1-32 (MVLPRLIPRLSRSAFKVAQANNRVFNAPFRGM), are a transit peptide targeting the mitochondrion. 189–196 (GAGVGKTV) is an ATP binding site.

F-type ATP synthases have 2 components, the catalytic core F(1) and the membrane-embedded component F(0), linked together by a central stalk and a peripheral stalk. The central stalk, also called rotor shaft, is often seen as part of F(1). The peripheral stalk is seen as part of F(0). F(0) contains the membrane channel next to the rotor. F-type ATP synthases form dimers but each monomer functions independently in ATP generation. The dimer consists of 17 different polypeptides: ATP1 (subunit alpha, 3 molecules per monomer, part of F(1)), ATP2 (subunit beta, 3 copies per monomer, part of F(1)), ATP3 (subunit gamma, part of the central stalk), ATP4 (subunit b, part of the peripheral stalk), ATP5/OSCP (subunit 5/OSCP, part of the peripheral stalk), ATP6 (subunit a, part of the peripheral stalk), ATP7 (subunit d, part of the peripheral stalk), ATP8 (subunit 8, part of the peripheral stalk), OLI1 (subunit c, part of the rotor, 10 molecules per monomer), ATP14 (subunit h, part of the peripheral stalk), ATP15 (subunit epsilon, part of the central stalk), ATP16 (subunit delta, part of the central stalk), ATP17 (subunit f, part of the peripheral stalk), ATP18 (subunit i/j, part of the peripheral stalk), ATP19 (subunit k, dimer-specific, at interface between monomers), ATP20 (subunit g, at interface between monomers), TIM11 (subunit e, at interface between monomers).

The protein localises to the mitochondrion inner membrane. It carries out the reaction ATP + H2O + 4 H(+)(in) = ADP + phosphate + 5 H(+)(out). Its function is as follows. Mitochondrial membrane ATP synthase (F(1)F(0) ATP synthase or Complex V) produces ATP from ADP in the presence of a proton gradient across the membrane which is generated by electron transport complexes of the respiratory chain. F-type ATP synthases consist of two structural domains, F(1) - containing the extramembraneous catalytic core, and F(0) - containing the membrane proton channel, linked together by a central stalk and a peripheral stalk. During catalysis, ATP synthesis in the catalytic domain of F(1) is coupled via a rotary mechanism of the central stalk subunits to proton translocation. Subunits alpha/ATP1 and beta/ATP2 form the catalytic core in F(1). Rotation of the central stalk against the surrounding alpha/ATP1(3)beta/ATP2(3) subunits leads to hydrolysis of ATP in three separate catalytic sites on the beta/ATP2 subunits. This is ATP synthase subunit beta, mitochondrial from Yarrowia lipolytica (strain CLIB 122 / E 150) (Yeast).